The following is a 209-amino-acid chain: Thymidylate kinase (209 aa).

ATP is bound at residue G13 to S20.

It belongs to the thymidylate kinase family.

It carries out the reaction dTMP + ATP = dTDP + ADP. Phosphorylation of dTMP to form dTDP in both de novo and salvage pathways of dTTP synthesis. This chain is Thymidylate kinase, found in Shewanella sp. (strain MR-4).